Consider the following 74-residue polypeptide: Protein A30 homolog (74 aa).

Belongs to the chordopoxvirinae A30 family. Interacts with protein G7; the interaction stabilizes both proteins. Phosphorylated by viral F10 kinase.

In terms of biological role, required for the association between the dense viroplasm and the viral membranes to form the mature virion (MV). The protein is Protein A30 homolog of Fowlpox virus (strain NVSL) (FPV).